The sequence spans 383 residues: GTP-binding protein 10 homolog (383 aa).

The Obg domain occupies 22–157; it reads PSFLDTLRLA…RIVNLDLKLI (136 aa). The region spanning 158–353 is the OBG-type G domain; sequence ADVGLVGFPN…VKSQLRRTLV (196 aa). GTP contacts are provided by residues 164–171, 211–215, and 287–290; these read GFPNAGKS, DLPGL, and NKMD.

Belongs to the TRAFAC class OBG-HflX-like GTPase superfamily. OBG GTPase family.

It localises to the nucleus. The protein localises to the nucleolus. Functionally, may be involved in the ribosome maturation process. This is GTP-binding protein 10 homolog from Drosophila pseudoobscura pseudoobscura (Fruit fly).